We begin with the raw amino-acid sequence, 355 residues long: Protein ATP1B4 (355 aa).

Residues M1–S108 are Nuclear-facing. The segment at A33–D77 is disordered. Over residues D50–E68 the composition is skewed to acidic residues. The chain crosses the membrane as a helical; Signal-anchor for type II membrane protein span at residues L109–M129. Residues Y130–T355 are Perinuclear space-facing.

It belongs to the X(+)/potassium ATPases subunit beta family. Associates with a SMAD7-transcriptional complex. Interacts with SNW1 and TOR1AIP1. Does not associate with known Na,K-ATPase alpha-subunits.

Its subcellular location is the nucleus inner membrane. May act as a transcriptional coregulator during muscle development through its interaction with SNW1. Has lost its ancestral function as a Na,K-ATPase beta-subunit. This is Protein ATP1B4 (ATP1B4) from Bos taurus (Bovine).